We begin with the raw amino-acid sequence, 428 residues long: UDP-N-acetylglucosamine 1-carboxyvinyltransferase 2 (428 aa).

Phosphoenolpyruvate is bound at residue 22–23 (KN). Arg92 is a binding site for UDP-N-acetyl-alpha-D-glucosamine. Cys116 serves as the catalytic Proton donor. Cys116 bears the 2-(S-cysteinyl)pyruvic acid O-phosphothioketal mark. Residues 121–125 (RPIDQ), Asp304, and Ile326 contribute to the UDP-N-acetyl-alpha-D-glucosamine site.

The protein belongs to the EPSP synthase family. MurA subfamily.

It is found in the cytoplasm. The catalysed reaction is phosphoenolpyruvate + UDP-N-acetyl-alpha-D-glucosamine = UDP-N-acetyl-3-O-(1-carboxyvinyl)-alpha-D-glucosamine + phosphate. The protein operates within cell wall biogenesis; peptidoglycan biosynthesis. In terms of biological role, cell wall formation. Adds enolpyruvyl to UDP-N-acetylglucosamine. This chain is UDP-N-acetylglucosamine 1-carboxyvinyltransferase 2, found in Oceanobacillus iheyensis (strain DSM 14371 / CIP 107618 / JCM 11309 / KCTC 3954 / HTE831).